Consider the following 802-residue polypeptide: Exocyst complex component 6 (802 aa).

The protein belongs to the SEC15 family. As to quaternary structure, the exocyst complex is composed of EXOC1, EXOC2, EXOC3, EXOC4, EXOC5, EXOC6, EXOC7 and EXOC8. Interacts with CNTRL. Interacts with RAB11A in a GTP-dependent manner.

It is found in the cytoplasm. The protein localises to the perinuclear region. It localises to the cell projection. The protein resides in the growth cone. Its subcellular location is the midbody. It is found in the midbody ring. In terms of biological role, component of the exocyst complex involved in the docking of exocytic vesicles with fusion sites on the plasma membrane. Together with RAB11A, RAB3IP, RAB8A, PARD3, PRKCI, ANXA2, CDC42 and DNMBP promotes transcytosis of PODXL to the apical membrane initiation sites (AMIS), apical surface formation and lumenogenesis. The protein is Exocyst complex component 6 (Exoc6) of Mus musculus (Mouse).